Here is a 469-residue protein sequence, read N- to C-terminus: MTRPVRTRFAPSPTGFIHLGNIRSALYPWAFARKMKGTFVLRIEDTDLERSTEASVDAILEGMAWLGLDYDEGPYYQMQRMDRYREVLAQMLEKDLVYPCYMSTEELDALRERQRAAGEKPRYDGTWRPEPGKVLPEPPAGVTPVLRFRNPLTGSVVWDDAVKGRVEISNEELDDLVIARPDGTPTYNFCVVVDDLDMGITHVIRGDDHVNNTPRQINILRALGGEVPVYAHLPTVLNEQGEKMSKRHGAMSVMGYRDAGYLPEAVLNYLARLGWSHGDAEIFSREQFVEWFDLEHLGKSPAQYDHNKLNWLNNHYIKEADDARLAELAKPFFAALGIDADAIARGPDLVGVMGLMKDRASTVKEIAENSTMFYRAPAPDAQALAQHVTDAVRPALAEFAAALKTAEWTKEAIAAALKAVLGAHKLKMPQLAMPVRLLVAGTTHTPSIDAVLLLFGRDVVVSRLAAALA.

A 'HIGH' region motif is present at residues 11 to 21; sequence PSPTGFIHLGN. Over residues 118–131 the composition is skewed to basic and acidic residues; that stretch reads GEKPRYDGTWRPEP. The disordered stretch occupies residues 118-139; it reads GEKPRYDGTWRPEPGKVLPEPP. Residues 243 to 247 carry the 'KMSKS' region motif; sequence KMSKR. Lysine 246 serves as a coordination point for ATP.

The protein belongs to the class-I aminoacyl-tRNA synthetase family. Glutamate--tRNA ligase type 1 subfamily. Monomer.

The protein localises to the cytoplasm. The enzyme catalyses tRNA(Glu) + L-glutamate + ATP = L-glutamyl-tRNA(Glu) + AMP + diphosphate. Catalyzes the attachment of glutamate to tRNA(Glu) in a two-step reaction: glutamate is first activated by ATP to form Glu-AMP and then transferred to the acceptor end of tRNA(Glu). This chain is Glutamate--tRNA ligase, found in Burkholderia pseudomallei (strain 668).